The sequence spans 250 residues: Mycofactocin precursor peptide peptidase (250 aa).

Positions 38, 40, 49, 127, and 166 each coordinate a divalent metal cation.

This sequence belongs to the creatininase superfamily. In terms of assembly, homooctamer. The cofactor is Fe(2+). Zn(2+) serves as cofactor.

The enzyme catalyses [mycofactocin precursor peptide]-C-terminal glycyl-N-{5-[(4-hydroxyphenyl)methyl]-4,4-dimethyl-2-oxopyrrolidin-3-yl}acetamide + H2O = [mycofactocin precursor peptide]-C-terminal glycine + 3-amino-5-[(4-hydroxyphenyl)methyl]-4,4-dimethyl-2-pyrrolidin-2-one. Its function is as follows. Peptidase involved in the biosynthesis of the enzyme cofactor mycofactocin (MFT). Catalyzes cleavage of the MftC-modified MftA peptide to liberate its final two residues, which consist of a cross-linked valine-decarboxylated tyrosine dipeptide (named 3-amino-5-[(4-hydroxyphenyl)methyl]-4,4-dimethyl-2-pyrrolidin-2-one or ADHP). This chain is Mycofactocin precursor peptide peptidase, found in Mycobacterium ulcerans (strain Agy99).